Here is a 199-residue protein sequence, read N- to C-terminus: Carbon disulfide hydrolase (199 aa).

Zn(2+) is bound by residues Cys-36, His-91, and Cys-94.

It belongs to the beta-class carbonic anhydrase family. In terms of assembly, exists as both octamers and hexadecamers in solution. The hexadecameric homooligomer may form a catenane, through interactions of two interlocked octameric rings. Zn(2+) is required as a cofactor.

The catalysed reaction is carbon disulfide + 2 H2O = 2 hydrogen sulfide + CO2 + 2 H(+). It functions in the pathway sulfur metabolism; hydrogen sulfide biosynthesis. In terms of biological role, catalyzes the conversion of carbon disulfide into hydrogen sulfide and carbon dioxide, with carbonyl sulfide as an intermediate. Likely plays a key role in sulfur metabolism that allows A.thiooxidans G8 to grow on carbon disulfide as the main carbon and energy source. Does not show carbonic anhydrase activity (hydration of CO(2) to carbonate). This is Carbon disulfide hydrolase from Acidithiobacillus thiooxidans (Thiobacillus thiooxidans).